Here is a 367-residue protein sequence, read N- to C-terminus: MSLANQVLAVNDDLPIRTHKPVHSGKVRSVYWLTEEDSARLIKEKGYDVAPDAPLAIMVISDRISAFDCIWHGEGGLKGVPGKGAALNAISNHWFKLFKDNGLADSHILDIPHPFVWIVQKAKPVKIEAICRKYITGSMWRAYANGEREFCGIELPEGLEKDKALPELLMTPSTKGILKGIPGVPEADDVNITRQNIVDNFEAFNFSNAKDIAQYEKLLKEGFNVISSALEAIDQTFVDTKFEFGYVHDAAGNEKLIYMDEVGTPDSSRIWDTKEYQAGNIVENSKEGFRQFLLSHFPDPDILLNKERMPEREALARDNELPVESLMDISRTYIGIAEKITGQPIKLSNDPKAEIIEILSKEYGLID.

This sequence belongs to the SAICAR synthetase family.

The catalysed reaction is 5-amino-1-(5-phospho-D-ribosyl)imidazole-4-carboxylate + L-aspartate + ATP = (2S)-2-[5-amino-1-(5-phospho-beta-D-ribosyl)imidazole-4-carboxamido]succinate + ADP + phosphate + 2 H(+). It participates in purine metabolism; IMP biosynthesis via de novo pathway; 5-amino-1-(5-phospho-D-ribosyl)imidazole-4-carboxamide from 5-amino-1-(5-phospho-D-ribosyl)imidazole-4-carboxylate: step 1/2. The chain is Phosphoribosylaminoimidazole-succinocarboxamide synthase from Vibrio campbellii (strain ATCC BAA-1116).